The chain runs to 181 residues: UPF0397 protein STER_0346 (181 aa).

A run of 5 helical transmembrane segments spans residues 11-31 (ATGIGAALFIIIGMFVNIPIF), 45-65 (LFSVIFGPITGFFMGFIGHAL), 72-92 (GNISWAWVLASGITGLVIGLF), 109-129 (IWFNLAQALGLLIGYGVVTPI), and 147-167 (FVAGVANFITIAIGGTLLLAI).

This sequence belongs to the UPF0397 family.

The protein localises to the cell membrane. This Streptococcus thermophilus (strain ATCC BAA-491 / LMD-9) protein is UPF0397 protein STER_0346.